The following is a 56-amino-acid chain: Small ribosomal subunit protein uS14 (56 aa).

4 residues coordinate Zn(2+): C21, C24, C39, and C42.

It belongs to the universal ribosomal protein uS14 family. Component of the 40S small ribosomal subunit. Zn(2+) is required as a cofactor.

Its subcellular location is the cytoplasm. The protein localises to the cytosol. The protein resides in the rough endoplasmic reticulum. Functionally, component of the small ribosomal subunit. The ribosome is a large ribonucleoprotein complex responsible for the synthesis of proteins in the cell. The chain is Small ribosomal subunit protein uS14 (rps29) from Hippocampus comes (Tiger tail seahorse).